Reading from the N-terminus, the 332-residue chain is Phosphate acyltransferase (332 aa).

Belongs to the PlsX family. In terms of assembly, homodimer. Probably interacts with PlsY.

It localises to the cytoplasm. The catalysed reaction is a fatty acyl-[ACP] + phosphate = an acyl phosphate + holo-[ACP]. The protein operates within lipid metabolism; phospholipid metabolism. Functionally, catalyzes the reversible formation of acyl-phosphate (acyl-PO(4)) from acyl-[acyl-carrier-protein] (acyl-ACP). This enzyme utilizes acyl-ACP as fatty acyl donor, but not acyl-CoA. In Streptococcus mutans serotype c (strain ATCC 700610 / UA159), this protein is Phosphate acyltransferase.